The chain runs to 355 residues: Uroporphyrinogen decarboxylase (355 aa).

Residues 38 to 42 (RQAGR), aspartate 87, tyrosine 162, serine 217, and histidine 331 each bind substrate.

This sequence belongs to the uroporphyrinogen decarboxylase family. As to quaternary structure, homodimer.

It localises to the cytoplasm. It carries out the reaction uroporphyrinogen III + 4 H(+) = coproporphyrinogen III + 4 CO2. It functions in the pathway porphyrin-containing compound metabolism; protoporphyrin-IX biosynthesis; coproporphyrinogen-III from 5-aminolevulinate: step 4/4. Functionally, catalyzes the decarboxylation of four acetate groups of uroporphyrinogen-III to yield coproporphyrinogen-III. The chain is Uroporphyrinogen decarboxylase from Streptomyces coelicolor (strain ATCC BAA-471 / A3(2) / M145).